The chain runs to 871 residues: Alanine--tRNA ligase (871 aa).

Residues histidine 561, histidine 565, cysteine 665, and histidine 669 each coordinate Zn(2+).

The protein belongs to the class-II aminoacyl-tRNA synthetase family. Requires Zn(2+) as cofactor.

Its subcellular location is the cytoplasm. The catalysed reaction is tRNA(Ala) + L-alanine + ATP = L-alanyl-tRNA(Ala) + AMP + diphosphate. Its function is as follows. Catalyzes the attachment of alanine to tRNA(Ala) in a two-step reaction: alanine is first activated by ATP to form Ala-AMP and then transferred to the acceptor end of tRNA(Ala). Also edits incorrectly charged Ser-tRNA(Ala) and Gly-tRNA(Ala) via its editing domain. The chain is Alanine--tRNA ligase from Dehalococcoides mccartyi (strain CBDB1).